Reading from the N-terminus, the 238-residue chain is MRPNNRELNQVRPVKITRHYTRYAEGSVLVEFGETKVLCNATVEETVPRFLKGQQQGWVTAEYGMLPRSTHSRMQREAAKGKQGGRTMEIQRLIARSLRAVVDLKALGERTVTVDCDVIQADGGTRTAAITGACVALHDAMSKLVADGVLKENPMKGLVAAISVGIVDGNAVCDLEYVEDSNAETDMNVVMVEDGRLVEVQGTAEGEPFSHMELLQLLDLAHQGINQLLDAQRKALGL.

Phosphate is bound by residues Arg-86 and 124–126 (GTR).

Belongs to the RNase PH family. As to quaternary structure, homohexameric ring arranged as a trimer of dimers.

The catalysed reaction is tRNA(n+1) + phosphate = tRNA(n) + a ribonucleoside 5'-diphosphate. Phosphorolytic 3'-5' exoribonuclease that plays an important role in tRNA 3'-end maturation. Removes nucleotide residues following the 3'-CCA terminus of tRNAs; can also add nucleotides to the ends of RNA molecules by using nucleoside diphosphates as substrates, but this may not be physiologically important. Probably plays a role in initiation of 16S rRNA degradation (leading to ribosome degradation) during starvation. This is Ribonuclease PH from Actinobacillus pleuropneumoniae serotype 7 (strain AP76).